A 470-amino-acid polypeptide reads, in one-letter code: uncharacterized protein (470 aa).

The segment at 439–470 is disordered; it reads SIKSSKSKKQLKSSKSKKPIKHTKTKNIYVET. Positions 443–463 are enriched in basic residues; sequence SKSKKQLKSSKSKKPIKHTKT.

This is an uncharacterized protein from Acanthamoeba polyphaga mimivirus (APMV).